Reading from the N-terminus, the 83-residue chain is Short neurotoxin C (83 aa).

The N-terminal stretch at 1-21 (MKTLLLTLVVVTMVCLDLAYT) is a signal peptide. Disulfide bonds link Cys24–Cys45, Cys38–Cys62, Cys64–Cys75, and Cys76–Cys81.

This sequence belongs to the three-finger toxin family. Short-chain subfamily. Type I alpha-neurotoxin sub-subfamily. Expressed by the venom gland.

The protein localises to the secreted. Functionally, binds to muscle nicotinic acetylcholine receptor (nAChR) and inhibit acetylcholine from binding to the receptor, thereby impairing neuromuscular transmission. This Laticauda colubrina (Yellow-lipped sea krait) protein is Short neurotoxin C.